Here is a 324-residue protein sequence, read N- to C-terminus: tRNA dimethylallyltransferase (324 aa).

Position 17 to 24 (17 to 24 (GPTASGKT)) interacts with ATP. Substrate is bound at residue 19–24 (TASGKT). 4 interaction with substrate tRNA regions span residues 42 to 45 (DSAL), 166 to 170 (QRIQR), 251 to 256 (RCVGYR), and 284 to 291 (KRQITWLR).

This sequence belongs to the IPP transferase family. In terms of assembly, monomer. Requires Mg(2+) as cofactor.

The catalysed reaction is adenosine(37) in tRNA + dimethylallyl diphosphate = N(6)-dimethylallyladenosine(37) in tRNA + diphosphate. Its function is as follows. Catalyzes the transfer of a dimethylallyl group onto the adenine at position 37 in tRNAs that read codons beginning with uridine, leading to the formation of N6-(dimethylallyl)adenosine (i(6)A). The chain is tRNA dimethylallyltransferase from Burkholderia vietnamiensis (strain G4 / LMG 22486) (Burkholderia cepacia (strain R1808)).